Consider the following 237-residue polypeptide: Keratin-associated protein 5-5 (237 aa).

A run of 8 repeats spans residues 62–65 (CCVP), 68–71 (CCKP), 74–77 (CCVP), 159–162 (CCKP), 178–181 (CCKP), 188–191 (CCKP), 198–201 (CCKP), and 227–230 (CCVP). Residues 62-230 (CCVPVCCCKP…CCCQSSCCVP (169 aa)) are 8 X 4 AA repeats of C-C-X-P.

Belongs to the KRTAP type 5 family. In terms of assembly, interacts with hair keratins. In terms of tissue distribution, restricted to hair root, not detected in any other tissues.

In terms of biological role, in the hair cortex, hair keratin intermediate filaments are embedded in an interfilamentous matrix, consisting of hair keratin-associated protein (KRTAP), which are essential for the formation of a rigid and resistant hair shaft through their extensive disulfide bond cross-linking with abundant cysteine residues of hair keratins. The matrix proteins include the high-sulfur and high-glycine-tyrosine keratins. This chain is Keratin-associated protein 5-5 (KRTAP5-5), found in Homo sapiens (Human).